A 445-amino-acid polypeptide reads, in one-letter code: MGITVLKNEGLDFHARISTPLSEIDDDIQKELLDLTKKVKIPGFRAGKVPVSIVKKKYGTSVRNDIIERRINHSVNHIIKEHNLNIIGRPKIEELQNESDKALEFTVKIELLPKITIPDLKKISLDRPKLEVNSKDVEEQLEKLAALTKNYTKESKAKIKDGDQVTIDAIGYIKEKTFEDGKLNDFKVIIGSNALIPGFEKQLIGSKTGSKVDVNVTFPENYHAKDLAGKDARFVVQIKAVHTAEPTVIDDEFAKKFQSNSLEELRTHFTKQIENESEEAINTIMKMNLFDKLEKLLDFDVPESLLEQEKNILKSGTDKNEQDESLLKDKSSKEITAYYNKLALRRVRIGLLLAEYAKSKNLQLEPDDLRKVIMQQARNFPGQENMIFDFYKNNPRAIEGLKGPALEDKAVQYIFNHEIKLKEKKYTKEELEKYLEAEEQRITLI.

The PPIase FKBP-type domain occupies glycine 162–threonine 247.

It belongs to the FKBP-type PPIase family. Tig subfamily.

Its subcellular location is the cytoplasm. It carries out the reaction [protein]-peptidylproline (omega=180) = [protein]-peptidylproline (omega=0). Its function is as follows. Involved in protein export. Acts as a chaperone by maintaining the newly synthesized protein in an open conformation. Functions as a peptidyl-prolyl cis-trans isomerase. The protein is Trigger factor of Rickettsia rickettsii (strain Sheila Smith).